The primary structure comprises 1025 residues: Multidrug resistance protein MdtC (1025 aa).

12 helical membrane passes run 3 to 23, 333 to 353, 360 to 380, 387 to 407, 431 to 451, 463 to 483, 528 to 548, 853 to 873, 875 to 895, 897 to 917, 953 to 973, and 984 to 1004; these read FFALFIYRPVATILLSVAITL, EVEQTLIISVALVILVVFLFL, IIPAVAVPVSLIGTFAAMYLC, LSLMALTIATGFVVDDAIVVL, VGFTVLSMSLSLVAVFLPLLL, FAVTLSVAIGISLLVSLTLTP, LVGVVLLGTIALNIWLYISIP, VILIIAAIATVYIVLGILYES, VHPLTILSTLPSAGVGALLAL, LFNAPFSLIALIGIMLLIGIV, PIMMTTLAALFGALPLVLSGG, and ITIVGGLVMSQLLTLYTTPVV.

It belongs to the resistance-nodulation-cell division (RND) (TC 2.A.6) family. MdtC subfamily. In terms of assembly, part of a tripartite efflux system composed of MdtA, MdtB and MdtC. MdtC forms a heteromultimer with MdtB.

It localises to the cell inner membrane. Its function is as follows. The MdtABC tripartite complex confers resistance against novobiocin and deoxycholate. This is Multidrug resistance protein MdtC from Escherichia coli O17:K52:H18 (strain UMN026 / ExPEC).